We begin with the raw amino-acid sequence, 522 residues long: Chromosomal replication initiator protein DnaA (522 aa).

A domain I, interacts with DnaA modulators region spans residues 1–71; the sequence is MQDFWHAASA…QSLACDYWEM (71 aa). Residues 71–185 form a domain II region; the sequence is MQVDVQFVLD…PVDDTVHERS (115 aa). The domain III, AAA+ region stretch occupies residues 186–402; sequence RLNPILTFDN…GALRKILAYS (217 aa). Residues glycine 230, glycine 232, lysine 233, and threonine 234 each contribute to the ATP site. Positions 403-522 are domain IV, binds dsDNA; that stretch reads NFHGKEITIE…LHVLEQTLKG (120 aa).

Belongs to the DnaA family. Oligomerizes as a right-handed, spiral filament on DNA at oriC.

The protein localises to the cytoplasm. Functionally, plays an essential role in the initiation and regulation of chromosomal replication. ATP-DnaA binds to the origin of replication (oriC) to initiate formation of the DNA replication initiation complex once per cell cycle. Binds the DnaA box (a 9 base pair repeat at the origin) and separates the double-stranded (ds)DNA. Forms a right-handed helical filament on oriC DNA; dsDNA binds to the exterior of the filament while single-stranded (ss)DNA is stabiized in the filament's interior. The ATP-DnaA-oriC complex binds and stabilizes one strand of the AT-rich DNA unwinding element (DUE), permitting loading of DNA polymerase. After initiation quickly degrades to an ADP-DnaA complex that is not apt for DNA replication. Binds acidic phospholipids. The chain is Chromosomal replication initiator protein DnaA from Ralstonia nicotianae (strain ATCC BAA-1114 / GMI1000) (Ralstonia solanacearum).